Reading from the N-terminus, the 299-residue chain is N-carbamoylputrescine amidase (299 aa).

The 259-residue stretch at 10 to 268 (VVVSSLQFAC…EAVLVAQFDL (259 aa)) folds into the CN hydrolase domain. The active-site Proton acceptor is E49. The Proton donor role is filled by K122. The active-site Nucleophile is the C159.

The protein belongs to the carbon-nitrogen hydrolase superfamily. Homooctamer (isoform 2). Expressed in roots, stems, leaves and flowers.

The enzyme catalyses N-carbamoylputrescine + H2O + 2 H(+) = putrescine + NH4(+) + CO2. It participates in amine and polyamine biosynthesis; putrescine biosynthesis via agmatine pathway; putrescine from N-carbamoylputrescine (amidase route): step 1/1. Involved in polyamine biosynthesis. Catalyzes the hydrolysis of N-carbamoylputrescine to produce putrescine and ammonia. This chain is N-carbamoylputrescine amidase, found in Arabidopsis thaliana (Mouse-ear cress).